A 446-amino-acid chain; its full sequence is N-succinylarginine dihydrolase (446 aa).

Substrate-binding positions include 21-30 (AGLSWGNVAS), Asn-112, and 139-140 (HR). Residue Glu-176 is part of the active site. Residue Arg-216 coordinates substrate. His-252 is an active-site residue. Substrate is bound by residues Asp-254 and Asn-364. The active-site Nucleophile is the Cys-370.

This sequence belongs to the succinylarginine dihydrolase family. Homodimer.

The catalysed reaction is N(2)-succinyl-L-arginine + 2 H2O + 2 H(+) = N(2)-succinyl-L-ornithine + 2 NH4(+) + CO2. It participates in amino-acid degradation; L-arginine degradation via AST pathway; L-glutamate and succinate from L-arginine: step 2/5. Catalyzes the hydrolysis of N(2)-succinylarginine into N(2)-succinylornithine, ammonia and CO(2). The sequence is that of N-succinylarginine dihydrolase from Marinobacter nauticus (strain ATCC 700491 / DSM 11845 / VT8) (Marinobacter aquaeolei).